A 156-amino-acid polypeptide reads, in one-letter code: ATP synthase subunit b (156 aa).

Residues 5 to 27 (ITLIGQMITFAIFVGFTMKFVWP) traverse the membrane as a helical segment.

Belongs to the ATPase B chain family. In terms of assembly, F-type ATPases have 2 components, F(1) - the catalytic core - and F(0) - the membrane proton channel. F(1) has five subunits: alpha(3), beta(3), gamma(1), delta(1), epsilon(1). F(0) has three main subunits: a(1), b(2) and c(10-14). The alpha and beta chains form an alternating ring which encloses part of the gamma chain. F(1) is attached to F(0) by a central stalk formed by the gamma and epsilon chains, while a peripheral stalk is formed by the delta and b chains.

The protein localises to the cell inner membrane. Its function is as follows. F(1)F(0) ATP synthase produces ATP from ADP in the presence of a proton or sodium gradient. F-type ATPases consist of two structural domains, F(1) containing the extramembraneous catalytic core and F(0) containing the membrane proton channel, linked together by a central stalk and a peripheral stalk. During catalysis, ATP synthesis in the catalytic domain of F(1) is coupled via a rotary mechanism of the central stalk subunits to proton translocation. Functionally, component of the F(0) channel, it forms part of the peripheral stalk, linking F(1) to F(0). The polypeptide is ATP synthase subunit b (Francisella tularensis subsp. tularensis (strain WY96-3418)).